The chain runs to 257 residues: Type III pantothenate kinase (257 aa).

5 to 12 (DIGNTNIK) serves as a coordination point for ATP. Residue 107–110 (GSDR) participates in substrate binding. The Proton acceptor role is filled by Asp-109. Thr-133 lines the ATP pocket.

Belongs to the type III pantothenate kinase family. Homodimer. NH4(+) serves as cofactor. K(+) is required as a cofactor.

The protein resides in the cytoplasm. It carries out the reaction (R)-pantothenate + ATP = (R)-4'-phosphopantothenate + ADP + H(+). The protein operates within cofactor biosynthesis; coenzyme A biosynthesis; CoA from (R)-pantothenate: step 1/5. Functionally, catalyzes the phosphorylation of pantothenate (Pan), the first step in CoA biosynthesis. This is Type III pantothenate kinase from Ehrlichia ruminantium (strain Welgevonden).